Consider the following 371-residue polypeptide: Cytochrome b (371 aa).

The next 4 helical transmembrane spans lie at phenylalanine 25–valine 45, tryptophan 69–isoleucine 90, tryptophan 105–leucine 125, and phenylalanine 170–isoleucine 190. The heme b site is built by histidine 75 and histidine 89. The heme b site is built by histidine 174 and histidine 188. Residue histidine 193 participates in a ubiquinone binding. 4 helical membrane-spanning segments follow: residues tyrosine 218–methionine 238, leucine 280–histidine 300, leucine 312–threonine 332, and phenylalanine 339–proline 358.

It belongs to the cytochrome b family. As to quaternary structure, the cytochrome bc1 complex contains 3 respiratory subunits (MT-CYB, CYC1 and UQCRFS1), 2 core proteins (UQCRC1 and UQCRC2) and probably 6 low-molecular weight proteins. Heme b is required as a cofactor.

Its subcellular location is the mitochondrion inner membrane. Its function is as follows. Component of the ubiquinol-cytochrome c reductase complex (complex III or cytochrome b-c1 complex) that is part of the mitochondrial respiratory chain. The b-c1 complex mediates electron transfer from ubiquinol to cytochrome c. Contributes to the generation of a proton gradient across the mitochondrial membrane that is then used for ATP synthesis. This chain is Cytochrome b (MT-CYB), found in Toxicocalamus preussi (Preuss's forest snake).